The sequence spans 377 residues: Peptide chain release factor 2 (377 aa).

Q257 carries the N5-methylglutamine modification.

This sequence belongs to the prokaryotic/mitochondrial release factor family. Methylated by PrmC. Methylation increases the termination efficiency of RF2.

It is found in the cytoplasm. In terms of biological role, peptide chain release factor 2 directs the termination of translation in response to the peptide chain termination codons UGA and UAA. The polypeptide is Peptide chain release factor 2 (Lactiplantibacillus plantarum (strain ATCC BAA-793 / NCIMB 8826 / WCFS1) (Lactobacillus plantarum)).